A 456-amino-acid chain; its full sequence is Probable transcription factor At3g04930 (456 aa).

The disordered stretch occupies residues 1-71 (MTSDHRDALF…LNSPSTSSLP (71 aa)). Composition is skewed to acidic residues over residues 15-38 (ESPD…DLRD) and 50-62 (AEAE…EEDL). Serine 16 is subject to Phosphoserine.

This sequence belongs to the GeBP family.

The sequence is that of Probable transcription factor At3g04930 from Arabidopsis thaliana (Mouse-ear cress).